A 156-amino-acid polypeptide reads, in one-letter code: ATP synthase subunit b (156 aa).

A helical membrane pass occupies residues 5–27; it reads ITLIGQMITFAIFVGFTMKFVWP.

Belongs to the ATPase B chain family. In terms of assembly, F-type ATPases have 2 components, F(1) - the catalytic core - and F(0) - the membrane proton channel. F(1) has five subunits: alpha(3), beta(3), gamma(1), delta(1), epsilon(1). F(0) has three main subunits: a(1), b(2) and c(10-14). The alpha and beta chains form an alternating ring which encloses part of the gamma chain. F(1) is attached to F(0) by a central stalk formed by the gamma and epsilon chains, while a peripheral stalk is formed by the delta and b chains.

It localises to the cell inner membrane. In terms of biological role, f(1)F(0) ATP synthase produces ATP from ADP in the presence of a proton or sodium gradient. F-type ATPases consist of two structural domains, F(1) containing the extramembraneous catalytic core and F(0) containing the membrane proton channel, linked together by a central stalk and a peripheral stalk. During catalysis, ATP synthesis in the catalytic domain of F(1) is coupled via a rotary mechanism of the central stalk subunits to proton translocation. Component of the F(0) channel, it forms part of the peripheral stalk, linking F(1) to F(0). This chain is ATP synthase subunit b, found in Francisella tularensis subsp. tularensis (strain WY96-3418).